Consider the following 723-residue polypeptide: Transcription factor E2F7 (723 aa).

The tract at residues 121 to 146 (AEEEEEEELDDSCQYEALDESERRPS) is disordered. The span at 122–139 (EEEEEEELDDSCQYEALD) shows a compositional bias: acidic residues. DNA-binding regions lie at residues 147–216 (RKQK…VWHG) and 264–349 (RKDK…KWIG). Polar residues-rich tracts occupy residues 356 to 370 (SSNS…SNSG) and 395 to 405 (LISSAPSTPHR). Disordered stretches follow at residues 356-379 (SSNS…KMAR), 395-417 (LISS…YSRK), 489-546 (SLRK…ASFG), 650-689 (EHHG…SKSF), and 702-723 (QSAA…TAAN). The segment covering 494–503 (ERSEEDDHQT) has biased composition (basic and acidic residues). Residues 520–535 (SESLSSSTRRSPVCSP) show a composition bias toward low complexity.

It belongs to the E2F/DP family. As to quaternary structure, homodimer and heterodimer: mainly forms homodimers and, to a lesser extent, heterodimers with e2f8.

The protein resides in the nucleus. In terms of biological role, atypical E2F transcription factor that participates in various processes such as angiogenesis and polyploidization of specialized cells. Mainly acts as a transcription repressor that binds DNA independently of DP proteins and specifically recognizes the E2 recognition site 5'-TTTC[CG]CGC-3'. Directly represses transcription of classical E2F transcription factors such as e2f1. Acts as a regulator of S-phase by recognizing and binding the E2-related site 5'-TTCCCGCC-3' and mediating repression of G1/S-regulated genes. Acts as a promoter of sprouting angiogenesis, possibly by acting as a transcription activator and promoting expression of vegfa. The polypeptide is Transcription factor E2F7 (e2f7) (Danio rerio (Zebrafish)).